The sequence spans 83 residues: Neurotoxin LmNaTx3 (83 aa).

The first 21 residues, 1–21 (MQLKIQLLMLVLMIVLTDVYS), serve as a signal peptide directing secretion. One can recognise an LCN-type CS-alpha/beta domain in the interval 22–83 (KDGFIVSKKN…NIAMKNKNYC (62 aa)). Disulfide bonds link C32-C83, C36-C59, C45-C64, and C49-C66.

Belongs to the long (4 C-C) scorpion toxin superfamily. Sodium channel inhibitor family. Alpha subfamily. Expressed by the venom gland.

It localises to the secreted. Functionally, binds voltage-independently at site-3 of voltage-gated sodium channels (Nav) and inhibits the inactivation of the activated channels, thereby blocking neuronal transmission. In Lychas mucronatus (Chinese swimming scorpion), this protein is Neurotoxin LmNaTx3.